The following is a 761-amino-acid chain: 1,4-alpha-glucan branching enzyme GlgB (761 aa).

The Nucleophile role is filled by Asp431. Glu484 functions as the Proton donor in the catalytic mechanism.

This sequence belongs to the glycosyl hydrolase 13 family. GlgB subfamily. Monomer.

It carries out the reaction Transfers a segment of a (1-&gt;4)-alpha-D-glucan chain to a primary hydroxy group in a similar glucan chain.. The protein operates within glycan biosynthesis; glycogen biosynthesis. Catalyzes the formation of the alpha-1,6-glucosidic linkages in glycogen by scission of a 1,4-alpha-linked oligosaccharide from growing alpha-1,4-glucan chains and the subsequent attachment of the oligosaccharide to the alpha-1,6 position. This is 1,4-alpha-glucan branching enzyme GlgB from Synechococcus sp. (strain WH7803).